The following is a 287-amino-acid chain: Probable ribosomal RNA small subunit methyltransferase A (287 aa).

Positions 29, 31, 56, 77, 102, and 117 each coordinate S-adenosyl-L-methionine.

Belongs to the class I-like SAM-binding methyltransferase superfamily. rRNA adenine N(6)-methyltransferase family. RsmA subfamily.

It localises to the cytoplasm. Functionally, specifically dimethylates two adjacent adenosines in the loop of a conserved hairpin near the 3'-end of 16S rRNA in the 30S particle. May play a critical role in biogenesis of 30S subunits. The sequence is that of Probable ribosomal RNA small subunit methyltransferase A from Methanosarcina barkeri (strain Fusaro / DSM 804).